The sequence spans 298 residues: Lipoyl synthase (298 aa).

Residues Cys40, Cys45, Cys51, Cys67, Cys71, Cys74, and Ser280 each coordinate [4Fe-4S] cluster. In terms of domain architecture, Radical SAM core spans 53-269 (AVRKTATFMI…KEIALSKGFS (217 aa)).

This sequence belongs to the radical SAM superfamily. Lipoyl synthase family. [4Fe-4S] cluster serves as cofactor.

The protein localises to the cytoplasm. It carries out the reaction [[Fe-S] cluster scaffold protein carrying a second [4Fe-4S](2+) cluster] + N(6)-octanoyl-L-lysyl-[protein] + 2 oxidized [2Fe-2S]-[ferredoxin] + 2 S-adenosyl-L-methionine + 4 H(+) = [[Fe-S] cluster scaffold protein] + N(6)-[(R)-dihydrolipoyl]-L-lysyl-[protein] + 4 Fe(3+) + 2 hydrogen sulfide + 2 5'-deoxyadenosine + 2 L-methionine + 2 reduced [2Fe-2S]-[ferredoxin]. It functions in the pathway protein modification; protein lipoylation via endogenous pathway; protein N(6)-(lipoyl)lysine from octanoyl-[acyl-carrier-protein]. In terms of biological role, catalyzes the radical-mediated insertion of two sulfur atoms into the C-6 and C-8 positions of the octanoyl moiety bound to the lipoyl domains of lipoate-dependent enzymes, thereby converting the octanoylated domains into lipoylated derivatives. This chain is Lipoyl synthase, found in Bacillus thuringiensis (strain Al Hakam).